We begin with the raw amino-acid sequence, 311 residues long: HPr kinase/phosphorylase (311 aa).

Active-site residues include His138 and Lys159. 153 to 160 (GDSGIGKS) contacts ATP. Ser160 provides a ligand contact to Mg(2+). Residue Asp177 is the Proton acceptor; for phosphorylation activity. Proton donor; for dephosphorylation activity of the active site. Residues 201–210 (LEIRGVGIID) form an important for the catalytic mechanism of both phosphorylation and dephosphorylation region. Glu202 contributes to the Mg(2+) binding site. Residue Arg243 is part of the active site. The segment at 264-269 (PVKTGR) is important for the catalytic mechanism of dephosphorylation.

Belongs to the HPrK/P family. As to quaternary structure, homohexamer. It depends on Mg(2+) as a cofactor.

The enzyme catalyses [HPr protein]-L-serine + ATP = [HPr protein]-O-phospho-L-serine + ADP + H(+). It catalyses the reaction [HPr protein]-O-phospho-L-serine + phosphate + H(+) = [HPr protein]-L-serine + diphosphate. Catalyzes the ATP- as well as the pyrophosphate-dependent phosphorylation of a specific serine residue in HPr, a phosphocarrier protein of the phosphoenolpyruvate-dependent sugar phosphotransferase system (PTS). HprK/P also catalyzes the pyrophosphate-producing, inorganic phosphate-dependent dephosphorylation (phosphorolysis) of seryl-phosphorylated HPr (P-Ser-HPr). The two antagonistic activities of HprK/P are regulated by several intracellular metabolites, which change their concentration in response to the absence or presence of rapidly metabolisable carbon sources (glucose, fructose, etc.) in the growth medium. Therefore, by controlling the phosphorylation state of HPr, HPrK/P is a sensor enzyme that plays a major role in the regulation of carbon metabolism and sugar transport: it mediates carbon catabolite repression (CCR), and regulates PTS-catalyzed carbohydrate uptake and inducer exclusion. This Streptococcus gordonii (strain Challis / ATCC 35105 / BCRC 15272 / CH1 / DL1 / V288) protein is HPr kinase/phosphorylase.